The sequence spans 237 residues: N-alpha-acetyltransferase 40 (237 aa).

The N-myristoyl glycine moiety is linked to residue Gly2. The region spanning 63–216 (SGLEPATVDW…EDCSYEILSR (154 aa)) is the N-acetyltransferase domain. Substrate is bound by residues Tyr85, 127-129 (DVE), and Tyr138. Acetyl-CoA-binding positions include 140-142 (VQL) and 148-153 (RKGLGK). Thr174 lines the substrate pocket. Asn179 contacts acetyl-CoA. The substrate site is built by Ser197 and Tyr211.

It belongs to the acetyltransferase family. NAA40 subfamily.

Its subcellular location is the cytoplasm. It localises to the nucleus. It catalyses the reaction N-terminal L-seryl-[histone H4] + acetyl-CoA = N-terminal N(alpha)-acetyl-L-seryl-[histone H4] + CoA + H(+). The catalysed reaction is N-terminal L-seryl-[histone H2A] + acetyl-CoA = N-terminal N(alpha)-acetyl-L-seryl-[histone H2A] + CoA + H(+). N-alpha-acetyltransferase that specifically mediates the acetylation of the N-terminal residues of histones H4 and H2A. In contrast to other N-alpha-acetyltransferase, has a very specific selectivity for histones H4 and H2A N-terminus and specifically recognizes the 'Ser-Gly-Arg-Gly sequence'. Acts as a negative regulator of apoptosis. May play a role in hepatic lipid metabolism. The chain is N-alpha-acetyltransferase 40 from Mus musculus (Mouse).